The sequence spans 216 residues: uncharacterized protein (216 aa).

The Integrase catalytic domain maps to 54-215 (TATQPNEKWT…SPVNYRTQSL (162 aa)).

Belongs to the transposase IS3/IS150/IS904 family.

This is an uncharacterized protein from Haemophilus influenzae (strain ATCC 51907 / DSM 11121 / KW20 / Rd).